The primary structure comprises 331 residues: MSRQLSRARPATVLGAMEMGRRMDAPTSAAVTRAFLERGHTEIDTAFLYSDGQSETILGGLGLRMGSSDCRVKIATKANPWIGNSLKPDSVRSQLETSLKRLQCPRVDLFYLHAPDHSAPVEETLRACHQLHQEGKFVELGLSNYAAWEVAEICTLCKSNGWILPTVYQGMYSATTRQVETELFPCLRHFGLRFYAYNPLAGGLLTGKYKYEDKDGKQPVGRFFGTQWAEIYRNHFWKEHHFEGIALVEKALQAAYGASAPSMTSAALRWMYHHSQLQGAHGDAVILGMSSLEQLEQNLAAAEEGPLEPAVVDAFNQAWHLFAHECPNYFI.

NADP(+) is bound at residue aspartate 44. Residue tyrosine 49 is the Proton donor of the active site. Phosphoserine is present on serine 85. Histidine 113 serves as a coordination point for substrate. NADP(+) contacts are provided by residues 143-144, glutamine 169, 198-208, and arginine 222; these read SN and NPLAGGLLTGK. Tyrosine 232 contributes to the substrate binding site. An NADP(+)-binding site is contributed by 290-298; sequence SSLEQLEQN.

Belongs to the aldo/keto reductase family. Aldo/keto reductase 2 subfamily. Mainly expressed in uterus.

Can reduce the dialdehyde protein-binding form of aflatoxin B1 (AFB1) to the non-binding AFB1 dialcohol. May be involved in protection of liver against the toxic and carcinogenic effects of AFB1, a potent hepatocarcinogen. This chain is Aflatoxin B1 aldehyde reductase member 4 (AKR7L), found in Homo sapiens (Human).